The primary structure comprises 492 residues: Phenylalanine--tRNA ligase alpha subunit (492 aa).

Residues Thr-335, 374–376 (QLE), and Tyr-414 contribute to the L-phenylalanine site. Glu-416 contributes to the Mg(2+) binding site. Phe-439 provides a ligand contact to L-phenylalanine.

It belongs to the class-II aminoacyl-tRNA synthetase family. Phe-tRNA synthetase alpha subunit type 2 subfamily. As to quaternary structure, tetramer of two alpha and two beta subunits. Mg(2+) is required as a cofactor.

The protein resides in the cytoplasm. The enzyme catalyses tRNA(Phe) + L-phenylalanine + ATP = L-phenylalanyl-tRNA(Phe) + AMP + diphosphate + H(+). The polypeptide is Phenylalanine--tRNA ligase alpha subunit (Methanosarcina acetivorans (strain ATCC 35395 / DSM 2834 / JCM 12185 / C2A)).